The chain runs to 926 residues: Alpha-aminoadipic semialdehyde synthase, mitochondrial (926 aa).

The transit peptide at 1-27 directs the protein to the mitochondrion; it reads MLRAQRLRLARLRACVSRGLHHKPVMA. The tract at residues 28–455 is lysine-ketoglutarate reductase; the sequence is LRREDVNAWE…DAVITSNGLL (428 aa). 3 positions are modified to N6-acetyllysine: Lys-48, Lys-52, and Lys-56. The residue at position 93 (Lys-93) is an N6-acetyllysine; alternate. Lys-93 is modified (N6-succinyllysine; alternate). An N6-acetyllysine modification is found at Lys-128. An N6-acetyllysine; alternate modification is found at Lys-138. N6-succinyllysine; alternate is present on Lys-138. Residue Lys-274 is modified to N6-succinyllysine. An N6-acetyllysine; alternate modification is found at Lys-286. Residue Lys-286 is modified to N6-succinyllysine; alternate. Lys-333 is modified (N6-succinyllysine). Position 458 is an N6-acetyllysine; alternate (Lys-458). An N6-succinyllysine; alternate modification is found at Lys-458. The tract at residues 477 to 926 is saccharopine dehydrogenase; sequence MSTKKKVLVL…VFNTQSTIKL (450 aa). Residues Ser-488, Asp-512, and Gln-516 each contribute to the NAD(+) site. 2 positions are modified to N6-acetyllysine; alternate: Lys-523 and Lys-535. An N6-succinyllysine; alternate mark is found at Lys-523 and Lys-535. NAD(+) is bound by residues Leu-554, Ala-576, and Ser-577. Residue 577 to 578 participates in L-saccharopine binding; it reads SY. Lys-584 carries the post-translational modification N6-acetyllysine; alternate. Lys-584 bears the N6-succinyllysine; alternate mark. 3 residues coordinate NAD(+): Leu-603, Asp-604, and Pro-605. Residue Asp-604 participates in L-saccharopine binding. Arg-703 contributes to the L-saccharopine binding site. Lys-707 bears the N6-acetyllysine mark. 724–726 contributes to the L-saccharopine binding site; the sequence is TLR. N6-succinyllysine is present on Lys-732. Lys-739 carries the N6-acetyllysine modification. At Lys-761 the chain carries N6-acetyllysine; alternate. The residue at position 761 (Lys-761) is an N6-succinyllysine; alternate. N6-acetyllysine is present on residues Lys-778 and Lys-780.

In the N-terminal section; belongs to the AlaDH/PNT family. This sequence in the C-terminal section; belongs to the saccharopine dehydrogenase family. As to quaternary structure, homotetramer.

The protein localises to the mitochondrion. It carries out the reaction L-saccharopine + NADP(+) + H2O = L-lysine + 2-oxoglutarate + NADPH + H(+). The catalysed reaction is L-saccharopine + NAD(+) + H2O = (S)-2-amino-6-oxohexanoate + L-glutamate + NADH + H(+). The protein operates within amino-acid degradation; L-lysine degradation via saccharopine pathway; glutaryl-CoA from L-lysine: step 1/6. It functions in the pathway amino-acid degradation; L-lysine degradation via saccharopine pathway; glutaryl-CoA from L-lysine: step 2/6. Functionally, bifunctional enzyme that catalyzes the first two steps in lysine degradation. The polypeptide is Alpha-aminoadipic semialdehyde synthase, mitochondrial (Rattus norvegicus (Rat)).